Consider the following 1038-residue polypeptide: Isoleucine--tRNA ligase (1038 aa).

The 'HIGH' region signature appears at 48–58; that stretch reads PTANGKPHVGH. The 'KMSKS' region signature appears at 590–594; that stretch reads KMSKS. K593 is a binding site for ATP.

The protein belongs to the class-I aminoacyl-tRNA synthetase family. IleS type 2 subfamily. In terms of assembly, monomer. Zn(2+) serves as cofactor.

Its subcellular location is the cytoplasm. It catalyses the reaction tRNA(Ile) + L-isoleucine + ATP = L-isoleucyl-tRNA(Ile) + AMP + diphosphate. In terms of biological role, catalyzes the attachment of isoleucine to tRNA(Ile). As IleRS can inadvertently accommodate and process structurally similar amino acids such as valine, to avoid such errors it has two additional distinct tRNA(Ile)-dependent editing activities. One activity is designated as 'pretransfer' editing and involves the hydrolysis of activated Val-AMP. The other activity is designated 'posttransfer' editing and involves deacylation of mischarged Val-tRNA(Ile). The polypeptide is Isoleucine--tRNA ligase (Clostridium novyi (strain NT)).